Consider the following 827-residue polypeptide: Probable beta-glucosidase H (827 aa).

The active site involves D223. The PA14 domain occupies R387–V546. Residues N471, N594, N600, and N625 are each glycosylated (N-linked (GlcNAc...) asparagine).

This sequence belongs to the glycosyl hydrolase 3 family.

The protein resides in the secreted. The catalysed reaction is Hydrolysis of terminal, non-reducing beta-D-glucosyl residues with release of beta-D-glucose.. The protein operates within glycan metabolism; cellulose degradation. Functionally, beta-glucosidases are one of a number of cellulolytic enzymes involved in the degradation of cellulosic biomass. Catalyzes the last step releasing glucose from the inhibitory cellobiose. The chain is Probable beta-glucosidase H (bglH) from Aspergillus flavus (strain ATCC 200026 / FGSC A1120 / IAM 13836 / NRRL 3357 / JCM 12722 / SRRC 167).